A 305-amino-acid chain; its full sequence is MKSDASTSAAPLKGLVGPLRSSEPALALPAVSPAVHLLEEASDLLVVHLDFHAALETCERAWQSLAEEPVSGTIVEVKCSLCVVGIQALAEMDRWREALSWVLRYYQVPEKLPPKVLELCILLYSKMKEPGAVLDVASAWLQDPDNQGLPDYGSLARLHVFRLLLPSGRLSEAEELAVRSAAFSEEQRVEALQAIHLARQQHTQEHTQEHSDSQEPQKLRQEGSFSQKLLSLLMLLRRLWGSVVSHLLSQPFRKGLLAALILCLLILRFDPAAPSSLPFLYQLTQLFRRIQKATLSRLYPLALRD.

The Cytoplasmic portion of the chain corresponds to 1-246 (MKSDASTSAA…RRLWGSVVSH (246 aa)). The helical; Signal-anchor for type II membrane protein transmembrane segment at 247–267 (LLSQPFRKGLLAALILCLLIL) threads the bilayer. Over 268–305 (RFDPAAPSSLPFLYQLTQLFRRIQKATLSRLYPLALRD) the chain is Peroxisomal matrix.

The protein belongs to the peroxin-26 family. In terms of assembly, interacts (via its cytoplasmic domain) with PEX6; interaction is direct and is ATP-dependent. Interacts with PEX1; interaction is indirect and is mediated via interaction with PEX6.

The protein resides in the peroxisome membrane. Functionally, peroxisomal docking factor that anchors PEX1 and PEX6 to peroxisome membranes. PEX26 is therefore required for the formation of the PEX1-PEX6 AAA ATPase complex, a complex that mediates the extraction of the PEX5 receptor from peroxisomal membrane. The polypeptide is Peroxisome assembly protein 26 (Mus musculus (Mouse)).